We begin with the raw amino-acid sequence, 366 residues long: Glycine betaine monooxygenase reductase subunit (366 aa).

The region spanning 16–119 (NGRHLVRCVK…HGPVGLFNAI (104 aa)) is the FAD-binding FR-type domain. One can recognise a 2Fe-2S ferredoxin-type domain in the interval 282–366 (HQVEFTATGK…VPKGDVVIDY (85 aa)). [2Fe-2S] cluster is bound by residues cysteine 316, cysteine 321, cysteine 324, and cysteine 354.

It in the N-terminal section; belongs to the FAD-binding oxidoreductase type 6 family. In terms of assembly, the system is composed of an oxygenase subunit (GbcA) and a reductase subunit (GbcB). It depends on FAD as a cofactor. [2Fe-2S] cluster serves as cofactor.

The catalysed reaction is glycine betaine + NADH + O2 + H(+) = N,N-dimethylglycine + formaldehyde + NAD(+) + H2O. In terms of biological role, involved in degradation of glycine betaine. Part of a Rieske-type oxygenase system that catalyzes the conversion of glycine betaine (GB) to dimethylglycine (DMG). This subunit is the ferredoxin reductase component of the system. Required for growth on choline and GB, but not for growth on DMG. The protein is Glycine betaine monooxygenase reductase subunit of Pseudomonas aeruginosa (strain ATCC 15692 / DSM 22644 / CIP 104116 / JCM 14847 / LMG 12228 / 1C / PRS 101 / PAO1).